Consider the following 396-residue polypeptide: Cytochrome P450 121 (396 aa).

Position 345 (Cys345) interacts with heme.

The protein belongs to the cytochrome P450 family. Heme serves as cofactor.

The protein localises to the cytoplasm. The chain is Cytochrome P450 121 (cyp121) from Mycobacterium bovis (strain ATCC BAA-935 / AF2122/97).